A 664-amino-acid chain; its full sequence is Translation factor guf1, mitochondrial (664 aa).

The N-terminal 43 residues, 1 to 43 (MRGCLQLARWLSAGPKCPAASLPKAPSGLYNTIRSFTSSAQLA), are a transit peptide targeting the mitochondrion. A tr-type G domain is found at 66 to 246 (DRYRNFCIVA…TVVEKIPAPV (181 aa)). GTP contacts are provided by residues 75–82 (AHVDHGKS), 139–143 (DTPGH), and 193–196 (NKVD).

It belongs to the TRAFAC class translation factor GTPase superfamily. Classic translation factor GTPase family. LepA subfamily.

The protein resides in the mitochondrion inner membrane. The enzyme catalyses GTP + H2O = GDP + phosphate + H(+). In terms of biological role, promotes mitochondrial protein synthesis. May act as a fidelity factor of the translation reaction, by catalyzing a one-codon backward translocation of tRNAs on improperly translocated ribosomes. Binds to mitochondrial ribosomes in a GTP-dependent manner. This Aspergillus oryzae (strain ATCC 42149 / RIB 40) (Yellow koji mold) protein is Translation factor guf1, mitochondrial (guf1).